The following is a 385-amino-acid chain: Putative glutamate--cysteine ligase 2 (385 aa).

It belongs to the glutamate--cysteine ligase type 2 family. YbdK subfamily.

It carries out the reaction L-cysteine + L-glutamate + ATP = gamma-L-glutamyl-L-cysteine + ADP + phosphate + H(+). In terms of biological role, ATP-dependent carboxylate-amine ligase which exhibits weak glutamate--cysteine ligase activity. The sequence is that of Putative glutamate--cysteine ligase 2 from Herpetosiphon aurantiacus (strain ATCC 23779 / DSM 785 / 114-95).